Consider the following 109-residue polypeptide: Spermidine export protein MdtI (109 aa).

The next 4 membrane-spanning stretches (helical) occupy residues 6–26 (WIHG…NVLL), 36–56 (CYGI…SQAV), 64–84 (AYAL…WVLF), and 88–108 (LNPK…MIKF).

It belongs to the drug/metabolite transporter (DMT) superfamily. Small multidrug resistance (SMR) (TC 2.A.7.1) family. MdtI subfamily. In terms of assembly, forms a complex with MdtJ.

It is found in the cell inner membrane. In terms of biological role, catalyzes the excretion of spermidine. The chain is Spermidine export protein MdtI from Salmonella choleraesuis (strain SC-B67).